A 394-amino-acid polypeptide reads, in one-letter code: NAD(P)H-quinone oxidoreductase subunit H (394 aa).

The protein belongs to the complex I 49 kDa subunit family. As to quaternary structure, NDH-1 can be composed of about 15 different subunits; different subcomplexes with different compositions have been identified which probably have different functions.

Its subcellular location is the cellular thylakoid membrane. The enzyme catalyses a plastoquinone + NADH + (n+1) H(+)(in) = a plastoquinol + NAD(+) + n H(+)(out). It catalyses the reaction a plastoquinone + NADPH + (n+1) H(+)(in) = a plastoquinol + NADP(+) + n H(+)(out). Its function is as follows. NDH-1 shuttles electrons from an unknown electron donor, via FMN and iron-sulfur (Fe-S) centers, to quinones in the respiratory and/or the photosynthetic chain. The immediate electron acceptor for the enzyme in this species is believed to be plastoquinone. Couples the redox reaction to proton translocation, and thus conserves the redox energy in a proton gradient. Cyanobacterial NDH-1 also plays a role in inorganic carbon-concentration. The chain is NAD(P)H-quinone oxidoreductase subunit H from Synechococcus sp. (strain CC9605).